Consider the following 280-residue polypeptide: BURP domain protein USPL1 (280 aa).

A signal peptide spans 1 to 24 (MASTFRLSISFLTLILFSLWVVEA). Residues 58-280 (YFTLNDLKLG…PLDNIVWVTK (223 aa)) form the BURP domain.

In terms of tissue distribution, expressed in cotyledons, radicle, floral buds, open flowers, roots and developing seeds, but not in leaves. Highly expressed in the root tips. Detected in young leaves, hypocotyls, stems and mature seed funiculum.

Its subcellular location is the protein storage vacuole. It localises to the golgi apparatus. The protein localises to the golgi stack. It is found in the trans-Golgi network. The protein resides in the prevacuolar compartment. Functionally, associated with the protein storage vacuole formation. This chain is BURP domain protein USPL1, found in Arabidopsis thaliana (Mouse-ear cress).